We begin with the raw amino-acid sequence, 142 residues long: Large ribosomal subunit protein uL13 (142 aa).

It belongs to the universal ribosomal protein uL13 family. In terms of assembly, part of the 50S ribosomal subunit.

Its function is as follows. This protein is one of the early assembly proteins of the 50S ribosomal subunit, although it is not seen to bind rRNA by itself. It is important during the early stages of 50S assembly. In Caldicellulosiruptor saccharolyticus (strain ATCC 43494 / DSM 8903 / Tp8T 6331), this protein is Large ribosomal subunit protein uL13.